The primary structure comprises 198 residues: Recombination protein RecR (198 aa).

A C4-type zinc finger spans residues 58 to 73 (CLNCGNVGTSDICDIC). Residues 81–175 (GELCVVEDVA…RLTSLAQGVP (95 aa)) form the Toprim domain.

This sequence belongs to the RecR family.

In terms of biological role, may play a role in DNA repair. It seems to be involved in an RecBC-independent recombinational process of DNA repair. It may act with RecF and RecO. In Ruegeria pomeroyi (strain ATCC 700808 / DSM 15171 / DSS-3) (Silicibacter pomeroyi), this protein is Recombination protein RecR.